The sequence spans 291 residues: Transcription factor bHLH53 (291 aa).

The region spanning 163-212 (PTLSSQSIAARGRRRRIAEKTHELGKLIPGGNKLNTAEMFQAAAKYVKFL) is the bHLH domain.

In terms of assembly, homodimer. Expressed constitutively in roots, leaves, stems, and flowers.

It is found in the nucleus. In Arabidopsis thaliana (Mouse-ear cress), this protein is Transcription factor bHLH53 (BHLH53).